Here is a 209-residue protein sequence, read N- to C-terminus: Ubiquitin-conjugating enzyme E2 S (209 aa).

The UBC core domain maps to 14-160; sequence QTIRQVMREL…ARMMTEIHAQ (147 aa). C98 functions as the Glycyl thioester intermediate in the catalytic mechanism. The disordered stretch occupies residues 162–209; sequence AKCGAGAHGDDKDDDGPSTKKHAGLDKKLQDKKKEKLLKEKKRMLKRL. The span at 169 to 199 shows a compositional bias: basic and acidic residues; it reads HGDDKDDDGPSTKKHAGLDKKLQDKKKEKLL. Residues 200–209 are compositionally biased toward basic residues; it reads KEKKRMLKRL.

Belongs to the ubiquitin-conjugating enzyme family.

The catalysed reaction is S-ubiquitinyl-[E1 ubiquitin-activating enzyme]-L-cysteine + [E2 ubiquitin-conjugating enzyme]-L-cysteine = [E1 ubiquitin-activating enzyme]-L-cysteine + S-ubiquitinyl-[E2 ubiquitin-conjugating enzyme]-L-cysteine.. The protein operates within protein modification; protein ubiquitination. Its function is as follows. Catalyzes the covalent attachment of ubiquitin to other proteins. Acts as an essential factor of the anaphase promoting complex/cyclosome (APC/C), a cell cycle-regulated ubiquitin ligase that controls progression through mitosis. Acts by specifically elongating polyubiquitin chains initiated by the E2 enzyme vih/UbcH10 on APC/C substrates, enhancing the degradation of APC/C substrates by the proteasome and promoting mitotic exit. In Drosophila erecta (Fruit fly), this protein is Ubiquitin-conjugating enzyme E2 S.